A 117-amino-acid polypeptide reads, in one-letter code: Gamma-aminobutyric acid receptor-associated protein-like 1 (117 aa).

The Phosphatidylethanolamine amidated glycine; alternate moiety is linked to residue glycine 116. The Phosphatidylserine amidated glycine; alternate moiety is linked to residue glycine 116. A propeptide (removed in mature form) is located at residue lysine 117.

It belongs to the ATG8 family. As to quaternary structure, interacts with ATG13, OPRK1, RB1CC1 and ULK1. Interacts with TP53INP1 and TP53INP2. Directly interacts with SQSTM1. Interacts with ATG3, ATG7 and MAP15. Interacts with TECPR2. Interacts with TBC1D5. Interacts with MAPK15. Interacts with TRIM5. Interacts with MEFV and TRIM21. Interacts with WDFY3. Interacts with the reticulophagy receptor TEX264. Interacts with UBA5. Interacts with KBTBD6 and KBTBD7; the interaction is direct. Interacts with reticulophagy regulators RETREG1, RETREG2 and RETREG3. Interacts with IRGM. Interacts with DNM2. Interacts with NCOA4 (via C-terminus). The precursor molecule is cleaved by ATG4 (ATG4A, ATG4B, ATG4C or ATG4D) to expose the glycine at the C-terminus and form the cytosolic form, GABARAPL1-I. The processed form is then activated by APG7L/ATG7, transferred to ATG3 and conjugated to phosphatidylethanolamine (PE) phospholipid to form the membrane-bound form, GABARAPL1-II. During non-canonical autophagy, the processed form is conjugated to phosphatidylserine (PS) phospholipid. ATG4 proteins also mediate the delipidation of PE-conjugated forms required for GABARAPL1 recycling when autophagosomes fuse with lysosomes. In addition, ATG4B and ATG4D mediate delipidation of ATG8 proteins conjugated to PS during non-canonical autophagy. ATG4B constitutes the major protein for proteolytic activation. ATG4D is the main enzyme for delipidation activity.

It is found in the cytoplasmic vesicle. The protein localises to the autophagosome. The protein resides in the cytoplasmic vesicle membrane. It localises to the cytoplasm. Its subcellular location is the cytoskeleton. It is found in the endoplasmic reticulum. The protein localises to the golgi apparatus. Ubiquitin-like modifier that increases cell-surface expression of kappa-type opioid receptor through facilitating anterograde intracellular trafficking of the receptor. Involved in formation of autophagosomal vacuoles. While LC3s are involved in elongation of the phagophore membrane, the GABARAP/GATE-16 subfamily is essential for a later stage in autophagosome maturation. Through its interaction with the reticulophagy receptor TEX264, participates in the remodeling of subdomains of the endoplasmic reticulum into autophagosomes upon nutrient stress, which then fuse with lysosomes for endoplasmic reticulum turnover. The polypeptide is Gamma-aminobutyric acid receptor-associated protein-like 1 (Pongo abelii (Sumatran orangutan)).